A 112-amino-acid polypeptide reads, in one-letter code: UPF0482 protein Ent638_1930 (112 aa).

The N-terminal stretch at 1–27 (MTTLRKRLCLATLLSLTALAFTAPVSA) is a signal peptide.

This sequence belongs to the UPF0482 family.

The protein is UPF0482 protein Ent638_1930 of Enterobacter sp. (strain 638).